Here is a 37-residue protein sequence, read N- to C-terminus: M-oxotoxin-Ot2a (37 aa).

In terms of tissue distribution, expressed by the venom gland.

It localises to the secreted. Its function is as follows. Disrupts biological membranes, particularly those rich in phosphocholine. Has antimicrobial activity against Gram-negative bacterium E.coli, Gram-positive bacteria B.subtilis and S.aureus, and hemolytic activity against sheep, pig and guinea pig red blood cells. Has insecticidal activity against S.frugiperda ovarian cells by opening non-selective ion channels. Enhances the insecticidal activity of spider venom neurotoxic peptides. The sequence is that of M-oxotoxin-Ot2a from Oxyopes takobius (Lynx spider).